The sequence spans 372 residues: Trihelix transcription factor GT-4 (372 aa).

The 65-residue stretch at 47–111 (APKKRAETWA…MCTDKWRNIL (65 aa)) folds into the Myb-like domain. Ser-167 carries the phosphoserine modification.

It localises to the nucleus. In terms of biological role, probable transcription factor that binds specific DNA sequence. This is Trihelix transcription factor GT-4 (GT-4) from Arabidopsis thaliana (Mouse-ear cress).